The chain runs to 457 residues: Siroheme synthase (457 aa).

The interval M1–T204 is precorrin-2 dehydrogenase /sirohydrochlorin ferrochelatase. NAD(+) is bound by residues D22–V23 and L43–A44. At S128 the chain carries Phosphoserine. Residues G216–H457 are uroporphyrinogen-III C-methyltransferase. P225 is an S-adenosyl-L-methionine binding site. The active-site Proton acceptor is the D248. K270 serves as the catalytic Proton donor. S-adenosyl-L-methionine contacts are provided by residues G301 to D303, I306, T331 to A332, M382, and G411.

In the N-terminal section; belongs to the precorrin-2 dehydrogenase / sirohydrochlorin ferrochelatase family. The protein in the C-terminal section; belongs to the precorrin methyltransferase family.

The enzyme catalyses uroporphyrinogen III + 2 S-adenosyl-L-methionine = precorrin-2 + 2 S-adenosyl-L-homocysteine + H(+). It catalyses the reaction precorrin-2 + NAD(+) = sirohydrochlorin + NADH + 2 H(+). The catalysed reaction is siroheme + 2 H(+) = sirohydrochlorin + Fe(2+). Its pathway is cofactor biosynthesis; adenosylcobalamin biosynthesis; precorrin-2 from uroporphyrinogen III: step 1/1. It participates in cofactor biosynthesis; adenosylcobalamin biosynthesis; sirohydrochlorin from precorrin-2: step 1/1. The protein operates within porphyrin-containing compound metabolism; siroheme biosynthesis; precorrin-2 from uroporphyrinogen III: step 1/1. It functions in the pathway porphyrin-containing compound metabolism; siroheme biosynthesis; siroheme from sirohydrochlorin: step 1/1. Its pathway is porphyrin-containing compound metabolism; siroheme biosynthesis; sirohydrochlorin from precorrin-2: step 1/1. Its function is as follows. Multifunctional enzyme that catalyzes the SAM-dependent methylations of uroporphyrinogen III at position C-2 and C-7 to form precorrin-2 via precorrin-1. Then it catalyzes the NAD-dependent ring dehydrogenation of precorrin-2 to yield sirohydrochlorin. Finally, it catalyzes the ferrochelation of sirohydrochlorin to yield siroheme. The protein is Siroheme synthase of Enterobacter sp. (strain 638).